The primary structure comprises 315 residues: N-acetyl-gamma-glutamyl-phosphate reductase (315 aa).

Residue cysteine 117 is part of the active site.

It belongs to the NAGSA dehydrogenase family. Type 2 subfamily.

The protein resides in the cytoplasm. The enzyme catalyses N-acetyl-L-glutamate 5-semialdehyde + phosphate + NADP(+) = N-acetyl-L-glutamyl 5-phosphate + NADPH + H(+). It functions in the pathway amino-acid biosynthesis; L-arginine biosynthesis; N(2)-acetyl-L-ornithine from L-glutamate: step 3/4. Functionally, catalyzes the NADPH-dependent reduction of N-acetyl-5-glutamyl phosphate to yield N-acetyl-L-glutamate 5-semialdehyde. The polypeptide is N-acetyl-gamma-glutamyl-phosphate reductase (Burkholderia lata (strain ATCC 17760 / DSM 23089 / LMG 22485 / NCIMB 9086 / R18194 / 383)).